Reading from the N-terminus, the 432-residue chain is MSLHYQTGFGNACATEALPGALPAGRNSPQICPYGLYAEQLSGTAFTAPRAENRRSWLYRIRPGVQHLPFAPFAGAQRWLSDFGRQPVTPNQLRWSPLPMPDAPTDFIDGMHTWGGNGGPEEQSGVGIHLYAANRSMQGRFFYNADGEMLIVPQQGRLRLATELGLIDIEPYEIAVVPRGVRLRVELLDDVARGYVLENFGTAMRLPELGPIGSNCLANARDFQIPVAWYEDVEGDFELIAKFTGGFWRAPITHSPLNVVAWHGTHAPYKYDLRNFNTVGSISYDHPDPSIFTVLTSPSDTPGTANMDFAIFPPRILAMENTFRPPWFHRNIASEFMGLIHGVYDAKAEGFAPGGASLHNCMSGHGPDADTFEKASHADTSQAHYIRDTMAFMFETRRVIRPTAQALASPQRQDDYYQCWQGLQKHFDPEQA.

His-286 (proton acceptor) is an active-site residue. The Fe cation site is built by His-329 and Glu-335. Positions 344 and 365 each coordinate homogentisate. Residue His-365 coordinates Fe cation.

Belongs to the homogentisate dioxygenase family. Hexamer; dimer of trimers. Fe cation is required as a cofactor.

The catalysed reaction is homogentisate + O2 = 4-maleylacetoacetate + H(+). Its pathway is amino-acid degradation; L-phenylalanine degradation; acetoacetate and fumarate from L-phenylalanine: step 4/6. Its function is as follows. Involved in the catabolism of homogentisate (2,5-dihydroxyphenylacetate or 2,5-OH-PhAc), a central intermediate in the degradation of phenylalanine and tyrosine. Catalyzes the oxidative ring cleavage of the aromatic ring of homogentisate to yield maleylacetoacetate. This Bordetella pertussis (strain Tohama I / ATCC BAA-589 / NCTC 13251) protein is Homogentisate 1,2-dioxygenase.